The chain runs to 98 residues: uncharacterized protein (98 aa).

2 consecutive transmembrane segments (helical) span residues 2–22 and 70–90; these read IVTLLNALSAMAAFTAAGLWW and AAKAAALAAACQGTAIALPIL.

The protein localises to the cell membrane. This is an uncharacterized protein from Sinorhizobium fredii (strain NBRC 101917 / NGR234).